The sequence spans 396 residues: Probable glucan endo-1,6-beta-glucosidase B (396 aa).

An N-terminal signal peptide occupies residues M1–A17. An N-linked (GlcNAc...) asparagine glycan is attached at N30. The Proton donor role is filled by E219. N-linked (GlcNAc...) asparagine glycosylation is present at N272. The Nucleophile role is filled by E320.

This sequence belongs to the glycosyl hydrolase 5 (cellulase A) family.

The protein resides in the secreted. It carries out the reaction Random hydrolysis of (1-&gt;6)-linkages in (1-&gt;6)-beta-D-glucans.. Functionally, beta-glucanases participate in the metabolism of beta-glucan, the main structural component of the cell wall. Acts on lutean, pustulan and 1,6-oligo-beta-D-glucosides. This Aspergillus fumigatus (strain ATCC MYA-4609 / CBS 101355 / FGSC A1100 / Af293) (Neosartorya fumigata) protein is Probable glucan endo-1,6-beta-glucosidase B (exgB).